An 85-amino-acid polypeptide reads, in one-letter code: ATP synthase subunit c (85 aa).

The next 2 membrane-spanning stretches (helical) occupy residues 20–40 (LGAG…GNIF) and 65–85 (FALT…ILFA).

Belongs to the ATPase C chain family. As to quaternary structure, F-type ATPases have 2 components, F(1) - the catalytic core - and F(0) - the membrane proton channel. F(1) has five subunits: alpha(3), beta(3), gamma(1), delta(1), epsilon(1). F(0) has three main subunits: a(1), b(2) and c(10-14). The alpha and beta chains form an alternating ring which encloses part of the gamma chain. F(1) is attached to F(0) by a central stalk formed by the gamma and epsilon chains, while a peripheral stalk is formed by the delta and b chains.

The protein localises to the cell inner membrane. Its function is as follows. F(1)F(0) ATP synthase produces ATP from ADP in the presence of a proton or sodium gradient. F-type ATPases consist of two structural domains, F(1) containing the extramembraneous catalytic core and F(0) containing the membrane proton channel, linked together by a central stalk and a peripheral stalk. During catalysis, ATP synthesis in the catalytic domain of F(1) is coupled via a rotary mechanism of the central stalk subunits to proton translocation. Key component of the F(0) channel; it plays a direct role in translocation across the membrane. A homomeric c-ring of between 10-14 subunits forms the central stalk rotor element with the F(1) delta and epsilon subunits. In Gluconobacter oxydans (strain 621H) (Gluconobacter suboxydans), this protein is ATP synthase subunit c.